The primary structure comprises 194 residues: ATP-dependent Clp protease proteolytic subunit (194 aa).

Ser98 functions as the Nucleophile in the catalytic mechanism. The active site involves His123.

Belongs to the peptidase S14 family. Fourteen ClpP subunits assemble into 2 heptameric rings which stack back to back to give a disk-like structure with a central cavity, resembling the structure of eukaryotic proteasomes.

Its subcellular location is the cytoplasm. The catalysed reaction is Hydrolysis of proteins to small peptides in the presence of ATP and magnesium. alpha-casein is the usual test substrate. In the absence of ATP, only oligopeptides shorter than five residues are hydrolyzed (such as succinyl-Leu-Tyr-|-NHMec, and Leu-Tyr-Leu-|-Tyr-Trp, in which cleavage of the -Tyr-|-Leu- and -Tyr-|-Trp bonds also occurs).. Cleaves peptides in various proteins in a process that requires ATP hydrolysis. Has a chymotrypsin-like activity. Plays a major role in the degradation of misfolded proteins. This Staphylococcus epidermidis (strain ATCC 35984 / DSM 28319 / BCRC 17069 / CCUG 31568 / BM 3577 / RP62A) protein is ATP-dependent Clp protease proteolytic subunit.